The chain runs to 96 residues: Small ribosomal subunit protein bS6c (96 aa).

Belongs to the bacterial ribosomal protein bS6 family.

The protein localises to the plastid. It is found in the chloroplast. Binds together with bS18 to 16S ribosomal RNA. The chain is Small ribosomal subunit protein bS6c (rps6) from Guillardia theta (Cryptophyte).